A 228-amino-acid chain; its full sequence is E3 ubiquitin-protein ligase RNF114 (228 aa).

Residues 29–68 form an RING-type zinc finger; sequence CPVCLEVYEKPVQVPCGHVFCSACLQECLKPKKPVCGVCR. Residues Cys91 and Cys94 each coordinate Zn(2+). The C2HC RNF-type zinc-finger motif lies at 91-110; sequence CHGCRKKFFLSKIRSHVATC. The residue at position 102 (Lys102) is an N6-acetyllysine. His106 and Cys110 together coordinate Zn(2+). Lys112 bears the N6-acetyllysine mark.

Interacts with XAF1, the interaction increases XAF1 stability and proapoptotic effects, and may regulate IFN signaling. Post-translationally, autoubiquitinated. Polyubiquitinated in the presence of E2 enzymes UBE2D1, UBE2D2 and UBE2D3, but only monoubiquitinated in the presence of UBE2E1.

It localises to the cytoplasm. The protein resides in the nucleus. The enzyme catalyses S-ubiquitinyl-[E2 ubiquitin-conjugating enzyme]-L-cysteine + [acceptor protein]-L-lysine = [E2 ubiquitin-conjugating enzyme]-L-cysteine + N(6)-ubiquitinyl-[acceptor protein]-L-lysine.. Its pathway is protein modification; protein ubiquitination. Functionally, E3 ubiquitin-protein ligase that promotes the ubiquitination of various substrates. In turn, participates in the regulation of many biological processes including cell cycle, apoptosis, osteoclastogenesis as well as innate or adaptive immunity. Acts as negative regulator of NF-kappa-B-dependent transcription by promoting the ubiquitination and stabilization of the NF-kappa-B inhibitor TNFAIP3. May promote the ubiquitination of TRAF6 as well. Also acts as a negative regulator of T-cell activation. Inhibits cellular dsRNA responses and interferon production by targeting MAVS component for proteasomal degradation. Ubiquitinates the CDK inhibitor CDKN1A leading to its degradationand probably also CDKN1B and CDKN1C. This activity stimulates cell cycle G1-to-S phase transition and suppresses cellular senescence. May play a role in spermatogenesis. This chain is E3 ubiquitin-protein ligase RNF114 (RNF114), found in Pan troglodytes (Chimpanzee).